The sequence spans 264 residues: Virulence plasmid ParA family protein pGP5-D (264 aa).

Residue 9–16 (FKGGTGKT) participates in ATP binding.

The protein belongs to the ParA family.

Functionally, required for growth within mammalian cells. In Chlamydia trachomatis, this protein is Virulence plasmid ParA family protein pGP5-D.